Here is a 389-residue protein sequence, read N- to C-terminus: Nicotinate phosphoribosyltransferase (389 aa).

A Phosphohistidine; by autocatalysis modification is found at histidine 216.

The protein belongs to the NAPRTase family. In terms of processing, transiently phosphorylated on a His residue during the reaction cycle. Phosphorylation strongly increases the affinity for substrates and increases the rate of nicotinate D-ribonucleotide production. Dephosphorylation regenerates the low-affinity form of the enzyme, leading to product release.

It carries out the reaction nicotinate + 5-phospho-alpha-D-ribose 1-diphosphate + ATP + H2O = nicotinate beta-D-ribonucleotide + ADP + phosphate + diphosphate. It functions in the pathway cofactor biosynthesis; NAD(+) biosynthesis; nicotinate D-ribonucleotide from nicotinate: step 1/1. Catalyzes the synthesis of beta-nicotinate D-ribonucleotide from nicotinate and 5-phospho-D-ribose 1-phosphate at the expense of ATP. The chain is Nicotinate phosphoribosyltransferase from Ralstonia nicotianae (strain ATCC BAA-1114 / GMI1000) (Ralstonia solanacearum).